Consider the following 87-residue polypeptide: A-agglutinin-binding subunit (87 aa).

The N-terminal stretch at 1 to 18 is a signal peptide; it reads MQLLRCFSIFSVIASVLA. A glycan (O-linked (Man...) threonine) is linked at threonine 22. Residue serine 30 is glycosylated (O-linked (Man...) serine). O-linked (Man...) threonine glycosylation occurs at threonine 32. Serine 39 carries an O-linked (Man...) serine glycan. Threonine 63 carries an O-linked (Man...) threonine glycan. Serine 66 is a glycosylation site (O-linked (Man...) serine). O-linked (Man...) threonine glycosylation occurs at threonine 75.

As to quaternary structure, heterodimer; disulfide-linked. Interacts with SAG1.

Receptor binding subunit of the a-agglutinin heterodimer. S.cerevisiae a and alpha cells express the complementary cell surface glycoproteins a-agglutinin and alpha-agglutinin, respectively, which interact with one another to promote cellular aggregation during mating. In Saccharomyces cerevisiae (strain ATCC 204508 / S288c) (Baker's yeast), this protein is A-agglutinin-binding subunit (AGA2).